A 518-amino-acid chain; its full sequence is Laccase (518 aa).

The first 21 residues, 1-21 (MSRFQSLLSFVLVSLAAVANA), serve as a signal peptide directing secretion. Plastocyanin-like domains are found at residues 23-148 (IGPV…FVVY) and 160-302 (IDND…ILRY). 2 N-linked (GlcNAc...) asparagine glycosylation sites follow: Asn72 and Asn75. Positions 85, 87, 130, and 132 each coordinate Cu cation. Cystine bridges form between Cys106-Cys507 and Cys138-Cys226. N-linked (GlcNAc...) asparagine glycosylation occurs at Asn229. The tract at residues 308 to 330 (VEPTTTQTTSTKPLNEADLHPLT) is disordered. Asn354, Asn362, and Asn398 each carry an N-linked (GlcNAc...) asparagine glycan. Residues 369-489 (SVPVLLQILS…AGFAVVLAED (121 aa)) enclose the Plastocyanin-like 3 domain. The Cu cation site is built by His416, His419, His421, His471, Cys472, His473, and His477.

This sequence belongs to the multicopper oxidase family. Requires Cu cation as cofactor.

Its subcellular location is the secreted. The catalysed reaction is 4 hydroquinone + O2 = 4 benzosemiquinone + 2 H2O. Functionally, lignin degradation and detoxification of lignin-derived products. Cleaves the C-C and C-O bonds of some phenolic lignin model compounds (such as O- and P-quinols, aminophenols and phenylenediamine). May also be involved in synthesis of phenoxazinone pigments. The protein is Laccase (LCC3-1) of Pycnoporus cinnabarinus (Cinnabar-red polypore).